A 203-amino-acid chain; its full sequence is 8-oxoguanine DNA glycosylase/AP lyase (203 aa).

Catalysis depends on residues Lys128 and Asp146.

The protein belongs to the type-2 OGG1 family.

The catalysed reaction is 2'-deoxyribonucleotide-(2'-deoxyribose 5'-phosphate)-2'-deoxyribonucleotide-DNA = a 3'-end 2'-deoxyribonucleotide-(2,3-dehydro-2,3-deoxyribose 5'-phosphate)-DNA + a 5'-end 5'-phospho-2'-deoxyribonucleoside-DNA + H(+). Catalyzes the excision of an oxidatively damaged form of guanine (7,8-dihydro-8-oxoguanine = 8-oxoG) from DNA. Also cleaves the DNA backbone at apurinic/apyrimidinic sites (AP sites). In Sulfolobus acidocaldarius (strain ATCC 33909 / DSM 639 / JCM 8929 / NBRC 15157 / NCIMB 11770), this protein is 8-oxoguanine DNA glycosylase/AP lyase.